The following is a 338-amino-acid chain: Phosphate acyltransferase (338 aa).

It belongs to the PlsX family. Homodimer. Probably interacts with PlsY.

It is found in the cytoplasm. The enzyme catalyses a fatty acyl-[ACP] + phosphate = an acyl phosphate + holo-[ACP]. Its pathway is lipid metabolism; phospholipid metabolism. Its function is as follows. Catalyzes the reversible formation of acyl-phosphate (acyl-PO(4)) from acyl-[acyl-carrier-protein] (acyl-ACP). This enzyme utilizes acyl-ACP as fatty acyl donor, but not acyl-CoA. The protein is Phosphate acyltransferase of Gloeobacter violaceus (strain ATCC 29082 / PCC 7421).